Here is a 522-residue protein sequence, read N- to C-terminus: MSFSRSAADAADTLPDLAATLGEPAVGAFVTLGDAFHTRLPAAPLAAPYVVGFSGEVAQLLDLPPSIAAQPGFAELFAGNPTRDWPANAMPYASVYSGHQFGVWAGQLGDGRALTIGERTGTDGRRYELQLKGSGRTPYSRMGDGRAVLRSSIREFLCSEAMHHLGIPTTRALTVIGSDQPVVREEIETSAVVTRVSESFVRFGHFEHFFSNDRPDLLRQLADHVIDRFYPECRRADDPYLALLEAATLRTADLVAQWQAVGFCHGVMNTDNMSILGVTIDYGPFGFVDAFDANHICNHSDTSGRYAYRMQPRIAHWNCYCLAQALLPLIGLQHGIDDDDARAERAVEDAQAVLAKFPERFGPALERAMRAKLGLELERESDAELANKLLETMHASHADFTLTFRRLAQISKHDASRDAPVRDLFIDRDAFDAWANLYRARLSEETRDDAARAAAMNRVNPKYVLRNHLAEVAIRRAKEKDFSEVERLAQILRRPFDEQPEHEAYAALPPDWAGSLEVSCSS.

Residues Gly109, Gly111, Arg112, Lys132, Asp144, Gly145, Arg195, and Arg202 each coordinate ATP. The Proton acceptor role is filled by Asp271. Residues Asn272 and Asp281 each coordinate Mg(2+). Asp281 serves as a coordination point for ATP.

The protein belongs to the SELO family. Requires Mg(2+) as cofactor. Mn(2+) serves as cofactor.

The catalysed reaction is L-seryl-[protein] + ATP = 3-O-(5'-adenylyl)-L-seryl-[protein] + diphosphate. The enzyme catalyses L-threonyl-[protein] + ATP = 3-O-(5'-adenylyl)-L-threonyl-[protein] + diphosphate. It carries out the reaction L-tyrosyl-[protein] + ATP = O-(5'-adenylyl)-L-tyrosyl-[protein] + diphosphate. It catalyses the reaction L-histidyl-[protein] + UTP = N(tele)-(5'-uridylyl)-L-histidyl-[protein] + diphosphate. The catalysed reaction is L-seryl-[protein] + UTP = O-(5'-uridylyl)-L-seryl-[protein] + diphosphate. The enzyme catalyses L-tyrosyl-[protein] + UTP = O-(5'-uridylyl)-L-tyrosyl-[protein] + diphosphate. Nucleotidyltransferase involved in the post-translational modification of proteins. It can catalyze the addition of adenosine monophosphate (AMP) or uridine monophosphate (UMP) to a protein, resulting in modifications known as AMPylation and UMPylation. The sequence is that of Protein nucleotidyltransferase YdiU from Burkholderia lata (strain ATCC 17760 / DSM 23089 / LMG 22485 / NCIMB 9086 / R18194 / 383).